Consider the following 351-residue polypeptide: L-threonine 3-dehydrogenase (351 aa).

Position 42 (C42) interacts with Zn(2+). Residues T44 and H47 each act as charge relay system in the active site. H67, E68, C97, C100, C103, and C111 together coordinate Zn(2+). Residues I179, D199, R204, 266–268, and 291–292 contribute to the NAD(+) site; these read LGL and IT.

It belongs to the zinc-containing alcohol dehydrogenase family. Homotetramer. Requires Zn(2+) as cofactor.

Its subcellular location is the cytoplasm. It carries out the reaction L-threonine + NAD(+) = (2S)-2-amino-3-oxobutanoate + NADH + H(+). It functions in the pathway amino-acid degradation; L-threonine degradation via oxydo-reductase pathway; glycine from L-threonine: step 1/2. In terms of biological role, catalyzes the NAD(+)-dependent oxidation of L-threonine to 2-amino-3-ketobutyrate. The chain is L-threonine 3-dehydrogenase from Symbiobacterium thermophilum (strain DSM 24528 / JCM 14929 / IAM 14863 / T).